The chain runs to 577 residues: Aspartate--tRNA(Asp) ligase (577 aa).

Glu-172 contributes to the L-aspartate binding site. The aspartate stretch occupies residues 196-199 (QLFK). Arg-218 lines the L-aspartate pocket. ATP contacts are provided by residues 218–220 (RDE) and Gln-227. Residue His-438 participates in L-aspartate binding. Residue Glu-473 participates in ATP binding. An L-aspartate-binding site is contributed by Arg-480. Position 525-528 (525-528 (GFDR)) interacts with ATP.

This sequence belongs to the class-II aminoacyl-tRNA synthetase family. Type 1 subfamily. As to quaternary structure, homodimer.

The protein resides in the cytoplasm. The enzyme catalyses tRNA(Asp) + L-aspartate + ATP = L-aspartyl-tRNA(Asp) + AMP + diphosphate. Catalyzes the attachment of L-aspartate to tRNA(Asp) in a two-step reaction: L-aspartate is first activated by ATP to form Asp-AMP and then transferred to the acceptor end of tRNA(Asp). Is specific for tRNA(Asp) since it cannot aspartylate tRNA(Asn). The sequence is that of Aspartate--tRNA(Asp) ligase (aspS1) from Deinococcus radiodurans (strain ATCC 13939 / DSM 20539 / JCM 16871 / CCUG 27074 / LMG 4051 / NBRC 15346 / NCIMB 9279 / VKM B-1422 / R1).